The following is a 353-amino-acid chain: uncharacterized protein (353 aa).

7 residues coordinate Zn(2+): Cys40, His70, Cys100, Cys103, Cys106, Cys114, and Cys158.

The protein belongs to the zinc-containing alcohol dehydrogenase family. It depends on Zn(2+) as a cofactor.

This is an uncharacterized protein from Escherichia coli (strain K12).